We begin with the raw amino-acid sequence, 375 residues long: Chaperone protein DnaJ (375 aa).

Residues 5-70 (DYYEILGISK…EKRAAYDQYG (66 aa)) form the J domain. The CR-type zinc finger occupies 130 to 208 (GIIKEICIPT…CHGNGRVERS (79 aa)). Residues cysteine 143, cysteine 146, cysteine 160, cysteine 163, cysteine 182, cysteine 185, cysteine 196, and cysteine 199 each contribute to the Zn(2+) site. CXXCXGXG motif repeat units follow at residues 143 to 150 (CEKCRGTG), 160 to 167 (CMTCHGQG), 182 to 189 (CPTCHGHG), and 196 to 203 (CNKCHGNG).

Belongs to the DnaJ family. Homodimer. Zn(2+) is required as a cofactor.

It is found in the cytoplasm. Functionally, participates actively in the response to hyperosmotic and heat shock by preventing the aggregation of stress-denatured proteins and by disaggregating proteins, also in an autonomous, DnaK-independent fashion. Unfolded proteins bind initially to DnaJ; upon interaction with the DnaJ-bound protein, DnaK hydrolyzes its bound ATP, resulting in the formation of a stable complex. GrpE releases ADP from DnaK; ATP binding to DnaK triggers the release of the substrate protein, thus completing the reaction cycle. Several rounds of ATP-dependent interactions between DnaJ, DnaK and GrpE are required for fully efficient folding. Also involved, together with DnaK and GrpE, in the DNA replication of plasmids through activation of initiation proteins. This Blochmanniella pennsylvanica (strain BPEN) protein is Chaperone protein DnaJ.